Reading from the N-terminus, the 175-residue chain is Isopentenyl-diphosphate Delta-isomerase (175 aa).

2 residues coordinate Mn(2+): histidine 22 and histidine 29. Residues 27 to 160 (KLHRAFSVLL…PAAYTPWLAE (134 aa)) form the Nudix hydrolase domain. The active site involves cysteine 64. Residue cysteine 64 coordinates Mg(2+). Histidine 66 contributes to the Mn(2+) binding site. Mg(2+) is bound at residue glutamate 84. Residues glutamate 110 and glutamate 112 each coordinate Mn(2+). Glutamate 112 is a catalytic residue.

The protein belongs to the IPP isomerase type 1 family. Mg(2+) serves as cofactor. It depends on Mn(2+) as a cofactor.

The protein localises to the cytoplasm. It catalyses the reaction isopentenyl diphosphate = dimethylallyl diphosphate. It participates in isoprenoid biosynthesis; dimethylallyl diphosphate biosynthesis; dimethylallyl diphosphate from isopentenyl diphosphate: step 1/1. Its function is as follows. Catalyzes the 1,3-allylic rearrangement of the homoallylic substrate isopentenyl (IPP) to its highly electrophilic allylic isomer, dimethylallyl diphosphate (DMAPP). This is Isopentenyl-diphosphate Delta-isomerase from Nocardia farcinica (strain IFM 10152).